A 159-amino-acid polypeptide reads, in one-letter code: Fimbrial protein MyfA (159 aa).

A signal peptide spans 1 to 29; it reads MNMKKFVKKPLAIAVLMLASGGMVNMVHA.

As to quaternary structure, forms a homomer composed of subunits assembled in a large structure resistant to proteases and chaotropic agents.

Its subcellular location is the fimbrium. In terms of biological role, major pilus subunit. Expressed only in pathogenic serotypes, it is part of myf, a probable virulence factor. The sequence is that of Fimbrial protein MyfA (myfA) from Yersinia enterocolitica.